Here is a 413-residue protein sequence, read N- to C-terminus: Serine hydroxymethyltransferase (413 aa).

Residues Leu-117 and 121-123 (GHL) contribute to the (6S)-5,6,7,8-tetrahydrofolate site. At Lys-226 the chain carries N6-(pyridoxal phosphate)lysine. (6S)-5,6,7,8-tetrahydrofolate-binding positions include Glu-239 and 349 to 351 (SPF).

The protein belongs to the SHMT family. Homodimer. Requires pyridoxal 5'-phosphate as cofactor.

It is found in the cytoplasm. The enzyme catalyses (6R)-5,10-methylene-5,6,7,8-tetrahydrofolate + glycine + H2O = (6S)-5,6,7,8-tetrahydrofolate + L-serine. It functions in the pathway one-carbon metabolism; tetrahydrofolate interconversion. It participates in amino-acid biosynthesis; glycine biosynthesis; glycine from L-serine: step 1/1. Catalyzes the reversible interconversion of serine and glycine with tetrahydrofolate (THF) serving as the one-carbon carrier. This reaction serves as the major source of one-carbon groups required for the biosynthesis of purines, thymidylate, methionine, and other important biomolecules. Also exhibits THF-independent aldolase activity toward beta-hydroxyamino acids, producing glycine and aldehydes, via a retro-aldol mechanism. In Bacillus cereus (strain AH820), this protein is Serine hydroxymethyltransferase.